We begin with the raw amino-acid sequence, 331 residues long: Biotin synthase (331 aa).

A Radical SAM core domain is found at 51–278 (QTIQLSTLMS…KSYVRLSAGR (228 aa)). Residues C66, C70, and C73 each contribute to the [4Fe-4S] cluster site. The [2Fe-2S] cluster site is built by C110, C141, C201, and R273.

Belongs to the radical SAM superfamily. Biotin synthase family. In terms of assembly, homodimer. Requires [4Fe-4S] cluster as cofactor. [2Fe-2S] cluster is required as a cofactor.

The enzyme catalyses (4R,5S)-dethiobiotin + (sulfur carrier)-SH + 2 reduced [2Fe-2S]-[ferredoxin] + 2 S-adenosyl-L-methionine = (sulfur carrier)-H + biotin + 2 5'-deoxyadenosine + 2 L-methionine + 2 oxidized [2Fe-2S]-[ferredoxin]. It functions in the pathway cofactor biosynthesis; biotin biosynthesis; biotin from 7,8-diaminononanoate: step 2/2. Its function is as follows. Catalyzes the conversion of dethiobiotin (DTB) to biotin by the insertion of a sulfur atom into dethiobiotin via a radical-based mechanism. In Histophilus somni (strain 129Pt) (Haemophilus somnus), this protein is Biotin synthase.